We begin with the raw amino-acid sequence, 436 residues long: Nicotinate phosphoribosyltransferase (436 aa).

A Phosphohistidine; by autocatalysis modification is found at H231.

It belongs to the NAPRTase family. Transiently phosphorylated on a His residue during the reaction cycle. Phosphorylation strongly increases the affinity for substrates and increases the rate of nicotinate D-ribonucleotide production. Dephosphorylation regenerates the low-affinity form of the enzyme, leading to product release.

The catalysed reaction is nicotinate + 5-phospho-alpha-D-ribose 1-diphosphate + ATP + H2O = nicotinate beta-D-ribonucleotide + ADP + phosphate + diphosphate. The protein operates within cofactor biosynthesis; NAD(+) biosynthesis; nicotinate D-ribonucleotide from nicotinate: step 1/1. Functionally, catalyzes the synthesis of beta-nicotinate D-ribonucleotide from nicotinate and 5-phospho-D-ribose 1-phosphate at the expense of ATP. The chain is Nicotinate phosphoribosyltransferase from Vibrio parahaemolyticus serotype O3:K6 (strain RIMD 2210633).